Consider the following 427-residue polypeptide: Glutamate-1-semialdehyde 2,1-aminomutase (427 aa).

The residue at position 267 (K267) is an N6-(pyridoxal phosphate)lysine.

Belongs to the class-III pyridoxal-phosphate-dependent aminotransferase family. HemL subfamily. As to quaternary structure, homodimer. It depends on pyridoxal 5'-phosphate as a cofactor.

The protein resides in the cytoplasm. It carries out the reaction (S)-4-amino-5-oxopentanoate = 5-aminolevulinate. It participates in porphyrin-containing compound metabolism; protoporphyrin-IX biosynthesis; 5-aminolevulinate from L-glutamyl-tRNA(Glu): step 2/2. This Sulfurihydrogenibium azorense (strain DSM 15241 / OCM 825 / Az-Fu1) protein is Glutamate-1-semialdehyde 2,1-aminomutase.